Consider the following 639-residue polypeptide: 1-deoxy-D-xylulose-5-phosphate synthase (639 aa).

Residues H76 and 117 to 119 (AHS) contribute to the thiamine diphosphate site. Position 148 (D148) interacts with Mg(2+). Thiamine diphosphate contacts are provided by residues 149-150 (GS), N181, Y288, and E370. N181 is a binding site for Mg(2+).

The protein belongs to the transketolase family. DXPS subfamily. Homodimer. Requires Mg(2+) as cofactor. Thiamine diphosphate is required as a cofactor.

The catalysed reaction is D-glyceraldehyde 3-phosphate + pyruvate + H(+) = 1-deoxy-D-xylulose 5-phosphate + CO2. It functions in the pathway metabolic intermediate biosynthesis; 1-deoxy-D-xylulose 5-phosphate biosynthesis; 1-deoxy-D-xylulose 5-phosphate from D-glyceraldehyde 3-phosphate and pyruvate: step 1/1. Functionally, catalyzes the acyloin condensation reaction between C atoms 2 and 3 of pyruvate and glyceraldehyde 3-phosphate to yield 1-deoxy-D-xylulose-5-phosphate (DXP). The protein is 1-deoxy-D-xylulose-5-phosphate synthase of Leptothrix cholodnii (strain ATCC 51168 / LMG 8142 / SP-6) (Leptothrix discophora (strain SP-6)).